The chain runs to 216 residues: Thiamine-phosphate synthase (216 aa).

4-amino-2-methyl-5-(diphosphooxymethyl)pyrimidine contacts are provided by residues 37–41 and aspartate 68; that span reads QVRSK. Positions 69 and 93 each coordinate Mg(2+). Threonine 112 contributes to the 4-amino-2-methyl-5-(diphosphooxymethyl)pyrimidine binding site. A 2-[(2R,5Z)-2-carboxy-4-methylthiazol-5(2H)-ylidene]ethyl phosphate-binding site is contributed by 140-142; that stretch reads TPT. Lysine 143 serves as a coordination point for 4-amino-2-methyl-5-(diphosphooxymethyl)pyrimidine.

The protein belongs to the thiamine-phosphate synthase family. It depends on Mg(2+) as a cofactor.

It carries out the reaction 2-[(2R,5Z)-2-carboxy-4-methylthiazol-5(2H)-ylidene]ethyl phosphate + 4-amino-2-methyl-5-(diphosphooxymethyl)pyrimidine + 2 H(+) = thiamine phosphate + CO2 + diphosphate. It catalyses the reaction 2-(2-carboxy-4-methylthiazol-5-yl)ethyl phosphate + 4-amino-2-methyl-5-(diphosphooxymethyl)pyrimidine + 2 H(+) = thiamine phosphate + CO2 + diphosphate. The catalysed reaction is 4-methyl-5-(2-phosphooxyethyl)-thiazole + 4-amino-2-methyl-5-(diphosphooxymethyl)pyrimidine + H(+) = thiamine phosphate + diphosphate. Its pathway is cofactor biosynthesis; thiamine diphosphate biosynthesis; thiamine phosphate from 4-amino-2-methyl-5-diphosphomethylpyrimidine and 4-methyl-5-(2-phosphoethyl)-thiazole: step 1/1. Functionally, condenses 4-methyl-5-(beta-hydroxyethyl)thiazole monophosphate (THZ-P) and 2-methyl-4-amino-5-hydroxymethyl pyrimidine pyrophosphate (HMP-PP) to form thiamine monophosphate (TMP). In Corynebacterium efficiens (strain DSM 44549 / YS-314 / AJ 12310 / JCM 11189 / NBRC 100395), this protein is Thiamine-phosphate synthase.